Consider the following 211-residue polypeptide: Large ribosomal subunit protein uL3 (211 aa).

N5-methylglutamine is present on glutamine 150.

This sequence belongs to the universal ribosomal protein uL3 family. Part of the 50S ribosomal subunit. Forms a cluster with proteins L14 and L19. In terms of processing, methylated by PrmB.

Functionally, one of the primary rRNA binding proteins, it binds directly near the 3'-end of the 23S rRNA, where it nucleates assembly of the 50S subunit. The sequence is that of Large ribosomal subunit protein uL3 from Pseudomonas syringae pv. syringae (strain B728a).